Reading from the N-terminus, the 338-residue chain is MGNWPHKHILTLSNFSIYDYKSVFELTERFKSLINAGTKKIPALQGNLITSIFFEASTRTRNSFELAAKRLSADVQSFSPSSSSLSKGETLIDTALTYAAMGSDILIIRHSSSHVPLEISKKLDATNTKTSVLNAGDGLHSHPSQGLLDLYTLIKFFSPELMKPEILYSKKILIVGDVLHSRVARSNLWALTAFGANVILCGPPTLIPEEFTSFVSSSPPNQLRDPISSRGSITISRSLEDSIKDADAVIVLRLQKERMMENLLSSIKSYSENYCLTPEKLSMNDKNIPILHPGPINRGIEISSRIVDEYPNCLINDQVSNGIPTRMALLYLLSKFNK.

Arg-59 and Thr-60 together coordinate carbamoyl phosphate. L-aspartate is bound at residue Lys-87. Arg-109, His-142, and Gln-145 together coordinate carbamoyl phosphate. Arg-182 and Arg-253 together coordinate L-aspartate. 2 residues coordinate carbamoyl phosphate: Gly-294 and Pro-295.

This sequence belongs to the aspartate/ornithine carbamoyltransferase superfamily. ATCase family. As to quaternary structure, heterododecamer (2C3:3R2) of six catalytic PyrB chains organized as two trimers (C3), and six regulatory PyrI chains organized as three dimers (R2).

It carries out the reaction carbamoyl phosphate + L-aspartate = N-carbamoyl-L-aspartate + phosphate + H(+). The protein operates within pyrimidine metabolism; UMP biosynthesis via de novo pathway; (S)-dihydroorotate from bicarbonate: step 2/3. In terms of biological role, catalyzes the condensation of carbamoyl phosphate and aspartate to form carbamoyl aspartate and inorganic phosphate, the committed step in the de novo pyrimidine nucleotide biosynthesis pathway. The sequence is that of Aspartate carbamoyltransferase catalytic subunit from Prochlorococcus marinus (strain MIT 9515).